A 322-amino-acid chain; its full sequence is Tetraacyldisaccharide 4'-kinase (322 aa).

Ser-54–Thr-61 serves as a coordination point for ATP.

The protein belongs to the LpxK family.

It catalyses the reaction a lipid A disaccharide + ATP = a lipid IVA + ADP + H(+). Its pathway is glycolipid biosynthesis; lipid IV(A) biosynthesis; lipid IV(A) from (3R)-3-hydroxytetradecanoyl-[acyl-carrier-protein] and UDP-N-acetyl-alpha-D-glucosamine: step 6/6. Transfers the gamma-phosphate of ATP to the 4'-position of a tetraacyldisaccharide 1-phosphate intermediate (termed DS-1-P) to form tetraacyldisaccharide 1,4'-bis-phosphate (lipid IVA). In Francisella tularensis subsp. tularensis (strain FSC 198), this protein is Tetraacyldisaccharide 4'-kinase.